We begin with the raw amino-acid sequence, 254 residues long: Triosephosphate isomerase (254 aa).

9–11 (NWK) lines the substrate pocket. The active-site Electrophile is the H96. The active-site Proton acceptor is E168. 2 residues coordinate substrate: G174 and S213.

It belongs to the triosephosphate isomerase family. As to quaternary structure, homodimer.

The protein resides in the cytoplasm. It carries out the reaction D-glyceraldehyde 3-phosphate = dihydroxyacetone phosphate. It participates in carbohydrate biosynthesis; gluconeogenesis. It functions in the pathway carbohydrate degradation; glycolysis; D-glyceraldehyde 3-phosphate from glycerone phosphate: step 1/1. In terms of biological role, involved in the gluconeogenesis. Catalyzes stereospecifically the conversion of dihydroxyacetone phosphate (DHAP) to D-glyceraldehyde-3-phosphate (G3P). The polypeptide is Triosephosphate isomerase (Buchnera aphidicola subsp. Schizaphis graminum (strain Sg)).